We begin with the raw amino-acid sequence, 132 residues long: UPF0299 membrane protein YohJ (132 aa).

At 1-6 the chain is on the periplasmic side; that stretch reads MSKTLN. The chain crosses the membrane as a helical span at residues 7 to 27; that stretch reads IIWQYLRAFVLIYACLYAGIF. Residues 28-30 are Cytoplasmic-facing; the sequence is IAS. Residues 31–51 form a helical membrane-spanning segment; the sequence is LLPVTIPGSIIGMLILFVLLA. Over 52–62 the chain is Periplasmic; sequence LQILPAKWVNP. The chain crosses the membrane as a helical span at residues 63 to 83; that stretch reads GCYVLIRYMALLFVPIGVGVM. The Cytoplasmic portion of the chain corresponds to 84–92; the sequence is QYFDLLRAQ. Residues 93–113 form a helical membrane-spanning segment; that stretch reads FGPVVVSCAISTLVVFLVVSW. The Periplasmic segment spans residues 114 to 132; the sequence is SSQLVHGERKVVGQKGSEE.

This sequence belongs to the UPF0299 family.

Its subcellular location is the cell inner membrane. The protein is UPF0299 membrane protein YohJ (yohJ) of Escherichia coli O157:H7.